A 67-amino-acid polypeptide reads, in one-letter code: DNA-directed RNA polymerase subunit omega (67 aa).

This sequence belongs to the RNA polymerase subunit omega family. In terms of assembly, the RNAP catalytic core consists of 2 alpha, 1 beta, 1 beta' and 1 omega subunit. When a sigma factor is associated with the core the holoenzyme is formed, which can initiate transcription.

The catalysed reaction is RNA(n) + a ribonucleoside 5'-triphosphate = RNA(n+1) + diphosphate. Its function is as follows. Promotes RNA polymerase assembly. Latches the N- and C-terminal regions of the beta' subunit thereby facilitating its interaction with the beta and alpha subunits. The chain is DNA-directed RNA polymerase subunit omega from Variovorax paradoxus (strain S110).